The chain runs to 109 residues: MEVKAIHRGARISAQKTRLVADQIRGLPIERALNILAFSPKKAAGIVKKVVESAIANAEHNEGADIDELKVKSIFVDKATSLKRFTARAKGRGNRIEKQTCHITVTLGN.

Belongs to the universal ribosomal protein uL22 family. As to quaternary structure, part of the 50S ribosomal subunit.

In terms of biological role, this protein binds specifically to 23S rRNA; its binding is stimulated by other ribosomal proteins, e.g. L4, L17, and L20. It is important during the early stages of 50S assembly. It makes multiple contacts with different domains of the 23S rRNA in the assembled 50S subunit and ribosome. Functionally, the globular domain of the protein is located near the polypeptide exit tunnel on the outside of the subunit, while an extended beta-hairpin is found that lines the wall of the exit tunnel in the center of the 70S ribosome. The protein is Large ribosomal subunit protein uL22 of Cupriavidus metallidurans (strain ATCC 43123 / DSM 2839 / NBRC 102507 / CH34) (Ralstonia metallidurans).